A 164-amino-acid polypeptide reads, in one-letter code: Ribosome maturation factor RimP (164 aa).

The protein belongs to the RimP family.

It localises to the cytoplasm. Required for maturation of 30S ribosomal subunits. In Cellvibrio japonicus (strain Ueda107) (Pseudomonas fluorescens subsp. cellulosa), this protein is Ribosome maturation factor RimP.